Here is a 218-residue protein sequence, read N- to C-terminus: Kappa-scoloptoxin(11)-Ssd1b (218 aa).

The first 16 residues, Met1–Ser16, serve as a signal peptide directing secretion. A propeptide spanning residues Ser17 to Arg25 is cleaved from the precursor.

Post-translationally, contains 8 disulfide bonds. In terms of tissue distribution, expressed by the venom gland.

It is found in the secreted. Functionally, voltage-gated potassium channel inhibitor. This Scolopendra dehaani (Thai centipede) protein is Kappa-scoloptoxin(11)-Ssd1b.